The chain runs to 336 residues: Tyrosine recombinase XerC (336 aa).

Residues 14-106 (VARCRWLEPF…SVKSFYRFLL (93 aa)) enclose the Core-binding (CB) domain. The Tyr recombinase domain maps to 127–330 (KVPRFVSEEE…TFSRLKEIYD (204 aa)). Residues Arg-183, Lys-207, His-282, Arg-285, and His-308 contribute to the active site. Tyr-317 (O-(3'-phospho-DNA)-tyrosine intermediate) is an active-site residue.

This sequence belongs to the 'phage' integrase family. XerC subfamily. Forms a cyclic heterotetrameric complex composed of two molecules of XerC and two molecules of XerD.

The protein localises to the cytoplasm. Functionally, site-specific tyrosine recombinase, which acts by catalyzing the cutting and rejoining of the recombining DNA molecules. The XerC-XerD complex is essential to convert dimers of the bacterial chromosome into monomers to permit their segregation at cell division. It also contributes to the segregational stability of plasmids. This Chlorobaculum parvum (strain DSM 263 / NCIMB 8327) (Chlorobium vibrioforme subsp. thiosulfatophilum) protein is Tyrosine recombinase XerC.